We begin with the raw amino-acid sequence, 94 residues long: MAGTVAHPEGITNPPIDELLEATDSKYSLVIYAAKRARQINAYYSQLGEGLLEYVGPLVETTNAQEKPLSIALREINAGLLTHETVSDSLPPVA.

Belongs to the RNA polymerase subunit omega family. As to quaternary structure, the RNAP catalytic core consists of 2 alpha, 1 beta, 1 beta' and 1 omega subunit. When a sigma factor is associated with the core the holoenzyme is formed, which can initiate transcription.

It catalyses the reaction RNA(n) + a ribonucleoside 5'-triphosphate = RNA(n+1) + diphosphate. Promotes RNA polymerase assembly. Latches the N- and C-terminal regions of the beta' subunit thereby facilitating its interaction with the beta and alpha subunits. In Frankia alni (strain DSM 45986 / CECT 9034 / ACN14a), this protein is DNA-directed RNA polymerase subunit omega.